Consider the following 267-residue polypeptide: Acyl-[acyl-carrier-protein]--UDP-N-acetylglucosamine O-acyltransferase (267 aa).

It belongs to the transferase hexapeptide repeat family. LpxA subfamily. As to quaternary structure, homotrimer.

The protein resides in the cytoplasm. It carries out the reaction a (3R)-hydroxyacyl-[ACP] + UDP-N-acetyl-alpha-D-glucosamine = a UDP-3-O-[(3R)-3-hydroxyacyl]-N-acetyl-alpha-D-glucosamine + holo-[ACP]. The protein operates within glycolipid biosynthesis; lipid IV(A) biosynthesis; lipid IV(A) from (3R)-3-hydroxytetradecanoyl-[acyl-carrier-protein] and UDP-N-acetyl-alpha-D-glucosamine: step 1/6. Involved in the biosynthesis of lipid A, a phosphorylated glycolipid that anchors the lipopolysaccharide to the outer membrane of the cell. In Cupriavidus metallidurans (strain ATCC 43123 / DSM 2839 / NBRC 102507 / CH34) (Ralstonia metallidurans), this protein is Acyl-[acyl-carrier-protein]--UDP-N-acetylglucosamine O-acyltransferase.